The primary structure comprises 1829 residues: Iron-regulated protein FrpC (1829 aa).

Hemolysin-type calcium-binding repeat units follow at residues 869–886 (FGHN…NDTL), 887–904 (IGGA…SDTY), 1015–1032 (NGGL…DDLL), 1033–1050 (NGDA…NDTL), 1051–1068 (DGGE…NDAL), 1069–1086 (NGGE…NDTL), 1087–1104 (IGGA…SDTY), 1215–1232 (NGGL…DDLL), 1233–1250 (NGDA…NDTL), 1251–1268 (DGGE…NDAL), 1269–1286 (NGGE…NDTL), 1287–1304 (IGGA…SDTY), 1415–1432 (NGGL…DDLL), 1433–1450 (NGDA…NDTL), 1451–1468 (NGGE…NDAL), 1469–1486 (NGGE…NDTL), 1487–1504 (IGGA…SDTY), 1615–1632 (NGGL…DDLL), 1633–1650 (NGDA…NDTL), 1651–1668 (DGGE…NDAL), 1669–1686 (NGGE…NDTL), and 1687–1704 (IGGA…SDTY). Positions 1671 to 1690 (GEGNDHLNGEDGNDTLIGGA) are disordered.

Belongs to the RTX prokaryotic toxin (TC 1.C.11) family.

The protein localises to the cell outer membrane. Its subcellular location is the secreted. Functionally, may participate in the pathogenesis of meningococcal disease. The sequence is that of Iron-regulated protein FrpC (frpC) from Neisseria meningitidis serogroup B (strain ATCC BAA-335 / MC58).